A 459-amino-acid polypeptide reads, in one-letter code: Cysteine--tRNA ligase (459 aa).

Cysteine 28 is a Zn(2+) binding site. The 'HIGH' region motif lies at valine 30–histidine 40. Cysteine 209, histidine 234, and glutamate 238 together coordinate Zn(2+). A 'KMSKS' region motif is present at residues lysine 266–serine 270. Lysine 269 is a binding site for ATP.

The protein belongs to the class-I aminoacyl-tRNA synthetase family. As to quaternary structure, monomer. Zn(2+) serves as cofactor.

The protein localises to the cytoplasm. It catalyses the reaction tRNA(Cys) + L-cysteine + ATP = L-cysteinyl-tRNA(Cys) + AMP + diphosphate. The sequence is that of Cysteine--tRNA ligase from Shewanella amazonensis (strain ATCC BAA-1098 / SB2B).